Consider the following 242-residue polypeptide: MHLTVFYLVALCTFASADDQPRYIINKLPYEQIKPFPAVEPDCRINEIALQFQPQLHISSGCHPYPAVDKNGYISTGLGVSHVFTDCDGSPEGSQVYGRAYVYKGYLAIMYAWYFPRDYMVSPVWIGHRNAWEHAVLWLGGLTEDPELLAVAAKSMWGYRTYAPPKSKYMKDDSFKLEYSWMVMSHHYLTATKDPGEFQDLIMWNNMTERARESLRLKSSSHFKSPLSDDRFFRALRKSYPF.

A signal peptide spans 1-17 (MHLTVFYLVALCTFASA). The Conserved undecapeptide motif motif lies at 108–118 (AIMYAWYFPRD). Positions 127–133 (GHRNAWE) match the Conserved heptapeptide motif motif. N-linked (GlcNAc...) asparagine glycosylation is present at Asn206.

This sequence belongs to the Necrosis inducing protein (NPP1) family.

It is found in the secreted. In terms of biological role, probable secreted effector that may act as a pathogen-associated molecular pattern (PAMP) recognized by the plant immune system. This chain is NLP effector protein 8, found in Plasmopara viticola (Downy mildew of grapevine).